Consider the following 468-residue polypeptide: Na(+)/H(+) antiporter NhaA 2 (468 aa).

The next 11 membrane-spanning stretches (helical) occupy residues 31-51, 82-102, 118-138, 147-167, 176-196, 199-219, 226-246, 321-341, 353-373, 393-413, and 422-442; these read FLHV…VALA, LHFW…GLEI, VLPV…YLAL, GWGV…ALLG, VLLL…IAVF, SSIS…VLAL, SPVV…SAGV, PWVA…VSLG, LLLG…MVAC, VLVV…VAGL, and GVAK…AMAV.

Belongs to the NhaA Na(+)/H(+) (TC 2.A.33) antiporter family.

Its subcellular location is the cell inner membrane. It catalyses the reaction Na(+)(in) + 2 H(+)(out) = Na(+)(out) + 2 H(+)(in). Na(+)/H(+) antiporter that extrudes sodium in exchange for external protons. The polypeptide is Na(+)/H(+) antiporter NhaA 2 (Sorangium cellulosum (strain So ce56) (Polyangium cellulosum (strain So ce56))).